The sequence spans 347 residues: S-adenosylmethionine:tRNA ribosyltransferase-isomerase (347 aa).

It belongs to the QueA family. As to quaternary structure, monomer.

It is found in the cytoplasm. The catalysed reaction is 7-aminomethyl-7-carbaguanosine(34) in tRNA + S-adenosyl-L-methionine = epoxyqueuosine(34) in tRNA + adenine + L-methionine + 2 H(+). The protein operates within tRNA modification; tRNA-queuosine biosynthesis. In terms of biological role, transfers and isomerizes the ribose moiety from AdoMet to the 7-aminomethyl group of 7-deazaguanine (preQ1-tRNA) to give epoxyqueuosine (oQ-tRNA). This is S-adenosylmethionine:tRNA ribosyltransferase-isomerase from Gluconobacter oxydans (strain 621H) (Gluconobacter suboxydans).